Here is a 382-residue protein sequence, read N- to C-terminus: LIM homeobox transcription factor 1-alpha (382 aa).

LIM zinc-binding domains are found at residues S33–V92 and V92–L154. 2 disordered regions span residues A161–R208 and K252–I286. Positions P195–A254 form a DNA-binding region, homeobox. Low complexity predominate over residues R256–R269.

Its subcellular location is the nucleus. Functionally, acts as a transcriptional activator by binding to an A/T-rich sequence, the FLAT element, in the insulin gene promoter. Required for development of the roof plate and, in turn, for specification of dorsal cell fates in the CNS and developing vertebrae. The chain is LIM homeobox transcription factor 1-alpha (Lmx1a) from Mus musculus (Mouse).